The sequence spans 547 residues: Dihydroxy-acid dehydratase (547 aa).

Asp78 contributes to the Mg(2+) binding site. A [2Fe-2S] cluster-binding site is contributed by Cys119. 2 residues coordinate Mg(2+): Asp120 and Lys121. Lys121 carries the post-translational modification N6-carboxylysine. Cys191 is a binding site for [2Fe-2S] cluster. Mg(2+) is bound at residue Glu439. Ser464 (proton acceptor) is an active-site residue.

It belongs to the IlvD/Edd family. In terms of assembly, homodimer. It depends on [2Fe-2S] cluster as a cofactor. Mg(2+) serves as cofactor.

The catalysed reaction is (2R)-2,3-dihydroxy-3-methylbutanoate = 3-methyl-2-oxobutanoate + H2O. It carries out the reaction (2R,3R)-2,3-dihydroxy-3-methylpentanoate = (S)-3-methyl-2-oxopentanoate + H2O. Its pathway is amino-acid biosynthesis; L-isoleucine biosynthesis; L-isoleucine from 2-oxobutanoate: step 3/4. It functions in the pathway amino-acid biosynthesis; L-valine biosynthesis; L-valine from pyruvate: step 3/4. Functionally, functions in the biosynthesis of branched-chain amino acids. Catalyzes the dehydration of (2R,3R)-2,3-dihydroxy-3-methylpentanoate (2,3-dihydroxy-3-methylvalerate) into 2-oxo-3-methylpentanoate (2-oxo-3-methylvalerate) and of (2R)-2,3-dihydroxy-3-methylbutanoate (2,3-dihydroxyisovalerate) into 2-oxo-3-methylbutanoate (2-oxoisovalerate), the penultimate precursor to L-isoleucine and L-valine, respectively. In Archaeoglobus fulgidus (strain ATCC 49558 / DSM 4304 / JCM 9628 / NBRC 100126 / VC-16), this protein is Dihydroxy-acid dehydratase.